Consider the following 398-residue polypeptide: Bone morphogenetic protein 2-A (398 aa).

Residues 1–23 form the signal peptide; it reads MVAGIHSLLLLLFYQVLLSGCTG. The propeptide occupies 24 to 284; the sequence is LIPEEGKRKY…GHALHKRQKR (261 aa). 3 N-linked (GlcNAc...) asparagine glycosylation sites follow: Asn137, Asn202, and Asn340. 3 cysteine pairs are disulfide-bonded: Cys298–Cys363, Cys327–Cys395, and Cys331–Cys397.

This sequence belongs to the TGF-beta family. Homodimer; disulfide-linked.

The protein resides in the secreted. Its function is as follows. Induces cartilage and bone formation. This chain is Bone morphogenetic protein 2-A (bmp2-a), found in Xenopus laevis (African clawed frog).